The sequence spans 544 residues: Chaperonin GroEL (544 aa).

ATP is bound by residues 30–33 (TLGP), K51, 87–91 (DGTTT), G415, and D495.

Belongs to the chaperonin (HSP60) family. Forms a cylinder of 14 subunits composed of two heptameric rings stacked back-to-back. Interacts with the co-chaperonin GroES.

Its subcellular location is the cytoplasm. It catalyses the reaction ATP + H2O + a folded polypeptide = ADP + phosphate + an unfolded polypeptide.. Its function is as follows. Together with its co-chaperonin GroES, plays an essential role in assisting protein folding. The GroEL-GroES system forms a nano-cage that allows encapsulation of the non-native substrate proteins and provides a physical environment optimized to promote and accelerate protein folding. This is Chaperonin GroEL from Methylobacillus flagellatus (strain ATCC 51484 / DSM 6875 / VKM B-1610 / KT).